The chain runs to 115 residues: Large ribosomal subunit protein bL19 (115 aa).

This sequence belongs to the bacterial ribosomal protein bL19 family.

Functionally, this protein is located at the 30S-50S ribosomal subunit interface and may play a role in the structure and function of the aminoacyl-tRNA binding site. In Citrobacter koseri (strain ATCC BAA-895 / CDC 4225-83 / SGSC4696), this protein is Large ribosomal subunit protein bL19.